The primary structure comprises 514 residues: Membrane-bound lytic murein transglycosylase F (514 aa).

The N-terminal stretch at 1-30 (MKKLKINYLFIGILTLLLAAALWPSIPWFG) is a signal peptide. Residues 31–269 (KTENHIAAIQ…RIEEKYLGHG (239 aa)) form a non-LT domain region. The tract at residues 270-514 (DDFDYVDTRS…LFTPQKKEEK (245 aa)) is LT domain. The active site involves Glu314.

The protein in the N-terminal section; belongs to the bacterial solute-binding protein 3 family. In the C-terminal section; belongs to the transglycosylase Slt family.

The protein localises to the cell outer membrane. The catalysed reaction is Exolytic cleavage of the (1-&gt;4)-beta-glycosidic linkage between N-acetylmuramic acid (MurNAc) and N-acetylglucosamine (GlcNAc) residues in peptidoglycan, from either the reducing or the non-reducing ends of the peptidoglycan chains, with concomitant formation of a 1,6-anhydrobond in the MurNAc residue.. Its function is as follows. Murein-degrading enzyme that degrades murein glycan strands and insoluble, high-molecular weight murein sacculi, with the concomitant formation of a 1,6-anhydromuramoyl product. Lytic transglycosylases (LTs) play an integral role in the metabolism of the peptidoglycan (PG) sacculus. Their lytic action creates space within the PG sacculus to allow for its expansion as well as for the insertion of various structures such as secretion systems and flagella. The polypeptide is Membrane-bound lytic murein transglycosylase F (Salmonella paratyphi B (strain ATCC BAA-1250 / SPB7)).